The sequence spans 325 residues: mRNA decay factor CTH1 (325 aa).

2 C3H1-type zinc fingers span residues 204-232 (LYKTELCESFTIKGYCKYGNKCQFAHGLN) and 242-270 (NYRTKPCINWSKLGYCPYGKRCCFKHGDD). Residues 284 to 306 (SKDTALTPLPTSLAPSNNDNITN) are disordered. A compositionally biased stretch (polar residues) spans 292–306 (LPTSLAPSNNDNITN).

Functionally, binds to specific AU-rich elements (ARE) in the 3'-untranslated region of target mRNAs and promotes their degradation. In response to iron deficiency, promotes the decay of many mRNAs encoding proteins involved in iron-dependent pathways. Negatively regulates primarily iron-dependent mitochondrial processes including respiration and amino acid biosynthesis. The sequence is that of mRNA decay factor CTH1 (CTH1) from Saccharomyces cerevisiae (strain ATCC 204508 / S288c) (Baker's yeast).